Here is a 428-residue protein sequence, read N- to C-terminus: 3-phosphoshikimate 1-carboxyvinyltransferase (428 aa).

3-phosphoshikimate-binding residues include K21, S22, and R26. K21 provides a ligand contact to phosphoenolpyruvate. 2 residues coordinate phosphoenolpyruvate: G91 and R119. Residues S164, Q166, D313, and K340 each contribute to the 3-phosphoshikimate site. Q166 is a binding site for phosphoenolpyruvate. The active-site Proton acceptor is D313. Phosphoenolpyruvate-binding residues include R344 and R386.

Belongs to the EPSP synthase family. In terms of assembly, monomer.

It is found in the cytoplasm. The enzyme catalyses 3-phosphoshikimate + phosphoenolpyruvate = 5-O-(1-carboxyvinyl)-3-phosphoshikimate + phosphate. It functions in the pathway metabolic intermediate biosynthesis; chorismate biosynthesis; chorismate from D-erythrose 4-phosphate and phosphoenolpyruvate: step 6/7. Catalyzes the transfer of the enolpyruvyl moiety of phosphoenolpyruvate (PEP) to the 5-hydroxyl of shikimate-3-phosphate (S3P) to produce enolpyruvyl shikimate-3-phosphate and inorganic phosphate. In Campylobacter jejuni subsp. doylei (strain ATCC BAA-1458 / RM4099 / 269.97), this protein is 3-phosphoshikimate 1-carboxyvinyltransferase.